Here is a 257-residue protein sequence, read N- to C-terminus: Acetylglutamate kinase (257 aa).

Substrate-binding positions include 43–44, arginine 65, and asparagine 157; that span reads GG. ATP contacts are provided by residues 180-185 and 208-210; these read DVSGIL and IIT.

Belongs to the acetylglutamate kinase family. ArgB subfamily. Homodimer.

It localises to the cytoplasm. It catalyses the reaction N-acetyl-L-glutamate + ATP = N-acetyl-L-glutamyl 5-phosphate + ADP. It participates in amino-acid biosynthesis; L-arginine biosynthesis; N(2)-acetyl-L-ornithine from L-glutamate: step 2/4. Catalyzes the ATP-dependent phosphorylation of N-acetyl-L-glutamate. This Edwardsiella ictaluri (strain 93-146) protein is Acetylglutamate kinase.